The sequence spans 71 residues: Disintegrin applaggin (71 aa).

One can recognise a Disintegrin domain in the interval 1-71 (EAGEECDCGS…SAGCPRNPFH (71 aa)). Intrachain disulfides connect Cys-6–Cys-21, Cys-8–Cys-16, Cys-15–Cys-38, Cys-29–Cys-35, Cys-34–Cys-58, and Cys-47–Cys-65. The Cell attachment site signature appears at 50–52 (RGD).

It belongs to the venom metalloproteinase (M12B) family. P-II subfamily. P-IIa sub-subfamily. As to quaternary structure, monomer (disintegrin). As to expression, expressed by the venom gland.

It is found in the secreted. Inhibits fibrinogen interaction with platelets. Acts by binding to alpha-IIb/beta-3 (ITGA2B/ITGB3) on the platelet surface and inhibits aggregation induced by ADP, thrombin, platelet-activating factor and collagen. The protein is Disintegrin applaggin of Agkistrodon piscivorus piscivorus (Eastern cottonmouth).